The following is a 443-amino-acid chain: MSEMTPREIVSELNKHIIGQDNAKRSVAIALRNRWRRMQLDEELRHEVTPKNILMIGPTGVGKTEIARRLAKLANAPFIKVEATKFTEVGYVGKEVDSIIRDLTDAAVKMVRVQAIEKNRYRAEELAEERILDVLIPPAKNNWGQAEQQQEPSAARQTFRKKLREGQLDDKEIEINLAAAPMGVEIMAPPGMEEMTSQLQSIFQNLGGQKQKPRKLKIKDAMKLLVEEEAAKLVNPEELKQDAIDAVEQHGIVFIDEIDKICKRGETSGPDVSREGVQRDLLPLVEGCTVSTKHGMVKTDHILFIASGAFQVAKPSDLIPELQGRLPIRVELQALTTSDFERILTEPNASVTVQYKALMATEGVNIEFTDSGIKRIAEAAWQVNETTENIGARRLHTVLERLMEEISYNASDLHGQNITIDAEYVSKHLDALVADEDLSRFIL.

Residues Ile-18, 60 to 65 (GVGKTE), Asp-256, Glu-321, and Arg-393 each bind ATP.

The protein belongs to the ClpX chaperone family. HslU subfamily. In terms of assembly, a double ring-shaped homohexamer of HslV is capped on each side by a ring-shaped HslU homohexamer. The assembly of the HslU/HslV complex is dependent on binding of ATP.

Its subcellular location is the cytoplasm. ATPase subunit of a proteasome-like degradation complex; this subunit has chaperone activity. The binding of ATP and its subsequent hydrolysis by HslU are essential for unfolding of protein substrates subsequently hydrolyzed by HslV. HslU recognizes the N-terminal part of its protein substrates and unfolds these before they are guided to HslV for hydrolysis. In Salmonella typhi, this protein is ATP-dependent protease ATPase subunit HslU.